The primary structure comprises 367 residues: Ferrochelatase (367 aa).

2 residues coordinate Fe cation: histidine 226 and glutamate 307.

Belongs to the ferrochelatase family.

Its subcellular location is the cytoplasm. The catalysed reaction is heme b + 2 H(+) = protoporphyrin IX + Fe(2+). It functions in the pathway porphyrin-containing compound metabolism; protoheme biosynthesis; protoheme from protoporphyrin-IX: step 1/1. Functionally, catalyzes the ferrous insertion into protoporphyrin IX. This chain is Ferrochelatase, found in Burkholderia pseudomallei (strain 1106a).